A 683-amino-acid polypeptide reads, in one-letter code: Pre-mRNA-splicing factor CLF1 (683 aa).

HAT repeat units lie at residues 40-72, 74-106, 108-140, 142-173, 175-206, 291-323, 336-367, 374-407, 409-440, 442-474, 476-513, 515-547, and 582-620; these read DWQR…FEYE, RDMR…CELR, RDVN…MEES, GQVE…FETR, GQVE…FERK, SILF…LLEE, ATVK…FLET, LTRS…FEIR, EKLD…LEIK, KEFD…LEEN, GDED…FETD, SEFE…YESS, and ENKE…YESI.

It belongs to the crooked-neck family. In terms of assembly, associated with the spliceosome.

It localises to the nucleus. Involved in pre-mRNA splicing and cell cycle progression. Required for the spliceosome assembly and initiation of the DNA replication. The sequence is that of Pre-mRNA-splicing factor CLF1 (CLF1) from Eremothecium gossypii (strain ATCC 10895 / CBS 109.51 / FGSC 9923 / NRRL Y-1056) (Yeast).